Reading from the N-terminus, the 82-residue chain is Small ribosomal subunit protein eS17 (82 aa).

The protein belongs to the eukaryotic ribosomal protein eS17 family.

The protein is Small ribosomal subunit protein eS17 of Sulfolobus acidocaldarius (strain ATCC 33909 / DSM 639 / JCM 8929 / NBRC 15157 / NCIMB 11770).